A 107-amino-acid chain; its full sequence is Nucleoid-associated protein RT0857 (107 aa).

It belongs to the YbaB/EbfC family. Homodimer.

It is found in the cytoplasm. It localises to the nucleoid. In terms of biological role, binds to DNA and alters its conformation. May be involved in regulation of gene expression, nucleoid organization and DNA protection. In Rickettsia typhi (strain ATCC VR-144 / Wilmington), this protein is Nucleoid-associated protein RT0857.